A 261-amino-acid chain; its full sequence is Glutamate 5-kinase (261 aa).

An ATP-binding site is contributed by Lys-7. Residues Ser-46, Asp-131, and Asn-147 each contribute to the substrate site. ATP contacts are provided by residues 167–168 and 209–215; these read SD and TGGIVTK.

It belongs to the glutamate 5-kinase family.

The protein resides in the cytoplasm. The catalysed reaction is L-glutamate + ATP = L-glutamyl 5-phosphate + ADP. The protein operates within amino-acid biosynthesis; L-proline biosynthesis; L-glutamate 5-semialdehyde from L-glutamate: step 1/2. Its function is as follows. Catalyzes the transfer of a phosphate group to glutamate to form L-glutamate 5-phosphate. This chain is Glutamate 5-kinase, found in Wolinella succinogenes (strain ATCC 29543 / DSM 1740 / CCUG 13145 / JCM 31913 / LMG 7466 / NCTC 11488 / FDC 602W) (Vibrio succinogenes).